The sequence spans 226 residues: Cytidylate kinase (226 aa).

Residue 10-18 (GPASSGKST) participates in ATP binding.

Belongs to the cytidylate kinase family. Type 1 subfamily.

Its subcellular location is the cytoplasm. It catalyses the reaction CMP + ATP = CDP + ADP. The catalysed reaction is dCMP + ATP = dCDP + ADP. The polypeptide is Cytidylate kinase (Streptococcus pyogenes serotype M28 (strain MGAS6180)).